Here is a 1028-residue protein sequence, read N- to C-terminus: Contactin-3 (1028 aa).

Residues 1–19 (MMLSWKQLILLSFIGCLAG) form the signal peptide. Ig-like C2-type domains lie at 26–117 (PVFV…AKLQ), 122–208 (ENFK…ARVL), 227–313 (PKIE…GRLT), 318–402 (PYWV…AELK), 408–497 (PDFS…LVVT), and 499–593 (PTRI…AELI). Disulfide bonds link Cys-50/Cys-100, Cys-144/Cys-196, Cys-249/Cys-297, Cys-339/Cys-386, and Cys-431/Cys-479. 2 N-linked (GlcNAc...) asparagine glycosylation sites follow: Asn-65 and Asn-193. N-linked (GlcNAc...) asparagine glycosylation is found at Asn-377, Asn-468, Asn-489, and Asn-538. The cysteines at positions 521 and 577 are disulfide-linked. 4 consecutive Fibronectin type-III domains span residues 600–698 (PPEN…TEEA), 703–800 (APSE…SAEE), 805–901 (APSH…TKKT), and 902–998 (PPSQ…TSMD). Residues 684-714 (GEPSLPSEKVRTEEAAPEVAPSEVSGGGGSR) are disordered. Asn-765, Asn-860, Asn-895, Asn-913, Asn-931, and Asn-956 each carry an N-linked (GlcNAc...) asparagine glycan. A lipid anchor (GPI-anchor amidated serine) is attached at Ser-1002. Residues 1003–1028 (TSAISDIHPVSGYISVLLFFIVNALW) constitute a propeptide, removed in mature form.

The protein belongs to the immunoglobulin superfamily. Contactin family. As to quaternary structure, interacts with PTPRG. In terms of tissue distribution, specifically expressed in brain. Not expressed in peripheral tissues such as heart, lung, liver, spleen, kidney and skeletal muscle. In brain, it is restricted to subsets of neurons such as Purkinje cells of the cerebellum, granule cells of the dentate gyrus, and neurons in the superficial layers of the cerebral cortex.

It localises to the cell membrane. Functionally, contactins mediate cell surface interactions during nervous system development. Has some neurite outgrowth-promoting activity. The chain is Contactin-3 (Cntn3) from Rattus norvegicus (Rat).